Here is a 436-residue protein sequence, read N- to C-terminus: Methyl-accepting chemotaxis protein Amb0994 (436 aa).

The Cytoplasmic portion of the chain corresponds to 1–8; that stretch reads METTLGSY. A helical transmembrane segment spans residues 9–29; it reads ARTLSLGMLVPSAICLLAGTF. A topological domain (periplasmic) is located at residue Gly-30. The chain crosses the membrane as a helical span at residues 31 to 51; it reads LLGGSSIALWVVIAVSLLGVV. Topologically, residues 52–436 are cytoplasmic; it reads GGVKIGGSAR…DGFIARIGGR (385 aa). Residues 180 to 416 enclose the Methyl-accepting transducer domain; that stretch reads AATELEASSG…QVADAASELS (237 aa). Gln-211 carries the post-translational modification Glutamate methyl ester (Gln). At Glu-225 the chain carries Glutamate methyl ester (Glu). The tract at residues 321–436 is required for interaction with MamK and to respond to the magnetic field; the sequence is TEDITSQVAH…DGFIARIGGR (116 aa).

Belongs to the methyl-accepting chemotaxis (MCP) protein family. In terms of assembly, interacts with MamK at cell poles and septa.

Its subcellular location is the cell inner membrane. Functionally, probable methyl-accepting taxis protein. May be the receptor that senses the torque generated from the interaction between the magnetosome dipole moment and the external magnetic field. Overproduction interferes with magnetotaxis, cells respond more slowly to changes in the magnetic field; requires the MamK-interacting C-terminus of the protein. The effect of magnetic sensing is to control flagellar rotation. Chemotactic-signal transducers respond to changes in the concentration of attractants and repellents in the environment, transduce a signal from the outside to the inside of the cell, and facilitate sensory adaptation through variation of methylation levels. Attractants increase the level of methylation while repellents decrease the level of methylation. The protein is Methyl-accepting chemotaxis protein Amb0994 of Paramagnetospirillum magneticum (strain ATCC 700264 / AMB-1) (Magnetospirillum magneticum).